We begin with the raw amino-acid sequence, 137 residues long: Small ribosomal subunit protein bS6 (137 aa).

The tract at residues 96–137 is disordered; the sequence is ITEASPMAKAKDERDTRRSSEERAPRAEATEEAEESAENTAE. Residues 104-124 are compositionally biased toward basic and acidic residues; that stretch reads KAKDERDTRRSSEERAPRAEA. Residues 125-137 show a composition bias toward acidic residues; that stretch reads TEEAEESAENTAE.

This sequence belongs to the bacterial ribosomal protein bS6 family.

Binds together with bS18 to 16S ribosomal RNA. The sequence is that of Small ribosomal subunit protein bS6 from Shewanella pealeana (strain ATCC 700345 / ANG-SQ1).